A 352-amino-acid chain; its full sequence is MPAQRMRSVIPPYMLRALLTRYAPQRDCALHTLNHVQSLLGNKPLRSPTEKNARAGERSAISTTPERHPTARQTGAQGGAAQQPRRAVDEAYDHLGVTYDFFWQAYRRNSVDNKGLPLVQRALRQGLPEQLSGTASRWCSETATARSSTVSPSPSTLVGHELTHGSDRERSRLIYYQQSGALNESLSDVFGSLVKQFHLQQTADKADWLIGAGLLAKGIKGKGLRSMSAPGTAYDDPLLGKDPQPASMKDYIQTKEDNGGVHLNSGIPNRAFYLAATVLGGFAGKKPVTSGMTRCATKRCRKTPTSDHLRPRHGETRAGLRTKRGDKVQQAWASGWQWSNETAADAQSGYGH.

Disordered regions lie at residues 41-86 and 144-164; these read GNKP…QPRR and TARS…ELTH. A compositionally biased stretch (basic and acidic residues) spans 48 to 57; the sequence is PTEKNARAGE. 2 stretches are compositionally biased toward low complexity: residues 71–85 and 144–156; these read ARQT…QQPR and TARS…SPST. Residue H160 participates in Zn(2+) binding. The active site involves E161. Zn(2+) is bound by residues H164 and E184. The active-site Proton donor is the H262. The tract at residues 303–325 is disordered; that stretch reads TPTSDHLRPRHGETRAGLRTKRG. Basic and acidic residues predominate over residues 304–325; the sequence is PTSDHLRPRHGETRAGLRTKRG.

The protein belongs to the peptidase M4 family. The cofactor is Zn(2+).

Its subcellular location is the secreted. In Serratia marcescens (strain ATCC 21074 / E-15), this protein is Extracellular minor metalloprotease (smp).